Here is a 103-residue protein sequence, read N- to C-terminus: Putative membrane protein insertion efficiency factor (103 aa).

It belongs to the UPF0161 family.

The protein resides in the cell membrane. Could be involved in insertion of integral membrane proteins into the membrane. The protein is Putative membrane protein insertion efficiency factor of Clavibacter sepedonicus (Clavibacter michiganensis subsp. sepedonicus).